The sequence spans 151 residues: Transcriptional repressor NrdR (151 aa).

A zinc finger lies at C3–C34. An ATP-cone domain is found at I49 to T139.

Belongs to the NrdR family. Requires Zn(2+) as cofactor.

In terms of biological role, negatively regulates transcription of bacterial ribonucleotide reductase nrd genes and operons by binding to NrdR-boxes. This Clostridium botulinum (strain 657 / Type Ba4) protein is Transcriptional repressor NrdR.